The sequence spans 188 residues: dCTP deaminase (188 aa).

DCTP-binding positions include 111 to 116 (KSTYAR), 135 to 137 (TLE), Gln-156, Tyr-170, and Gln-180. Glu-137 acts as the Proton donor/acceptor in catalysis.

Belongs to the dCTP deaminase family. As to quaternary structure, homotrimer.

The catalysed reaction is dCTP + H2O + H(+) = dUTP + NH4(+). It participates in pyrimidine metabolism; dUMP biosynthesis; dUMP from dCTP (dUTP route): step 1/2. Its function is as follows. Catalyzes the deamination of dCTP to dUTP. The sequence is that of dCTP deaminase from Dichelobacter nodosus (strain VCS1703A).